The chain runs to 312 residues: Apolipoprotein E (312 aa).

The first 18 residues, 1–18, serve as a signal peptide directing secretion; sequence MKALWALLLVPLLTGCLA. 8 repeat units span residues 72–93, 94–115, 116–137, 138–159, 160–181, 182–203, 204–225, and 226–247. The tract at residues 72–247 is 8 X 22 AA approximate tandem repeats; it reads VLMEDTMTEV…RLEEVREQME (176 aa). Residue methionine 135 is modified to Methionine sulfoxide. Position 139 is a phosphoserine (serine 139). The interval 150-160 is LDL and other lipoprotein receptors binding; it reads HLRKMRKRLMR. The tract at residues 150–160 is LDL receptor binding; that stretch reads HLRKMRKRLMR. 154–157 provides a ligand contact to heparin; that stretch reads MRKR. Residues 202 to 282 are lipid-binding and lipoprotein association; the sequence is TANLGAGAAQ…GWFEPLVEDM (81 aa). 221-228 contacts heparin; sequence SDRIRGRL. Residues 258–312 form a homooligomerization region; the sequence is QQIRLQAEIFQARIKGWFEPLVEDMQRQWANLMEKIQASVATNSIASTTVPLENQ. The specificity for association with VLDL stretch occupies residues 270–282; sequence RIKGWFEPLVEDM.

This sequence belongs to the apolipoprotein A1/A4/E family. As to quaternary structure, homotetramer. May interact with ABCA1; functionally associated with ABCA1 in the biogenesis of HDLs. May interact with APP/A4 amyloid-beta peptide; the interaction is extremely stable in vitro but its physiological significance is unclear. May interact with MAPT. May interact with MAP2. In the cerebrospinal fluid, interacts with secreted SORL1. Interacts with PMEL; this allows the loading of PMEL luminal fragment on ILVs to induce fibril nucleation. In terms of processing, APOE exists as multiple glycosylated and sialylated glycoforms within cells and in plasma. The extent of glycosylation and sialylation are tissue and context specific. Post-translationally, glycated in plasma VLDL. Phosphorylated by FAM20C in the extracellular medium.

It is found in the secreted. Its subcellular location is the extracellular space. The protein localises to the extracellular matrix. It localises to the extracellular vesicle. The protein resides in the endosome. It is found in the multivesicular body. Its function is as follows. APOE is an apolipoprotein, a protein associating with lipid particles, that mainly functions in lipoprotein-mediated lipid transport between organs via the plasma and interstitial fluids. APOE is a core component of plasma lipoproteins and is involved in their production, conversion and clearance. Apolipoproteins are amphipathic molecules that interact both with lipids of the lipoprotein particle core and the aqueous environment of the plasma. As such, APOE associates with chylomicrons, chylomicron remnants, very low density lipoproteins (VLDL) and intermediate density lipoproteins (IDL) but shows a preferential binding to high-density lipoproteins (HDL). It also binds a wide range of cellular receptors including the LDL receptor/LDLR and the very low-density lipoprotein receptor/VLDLR that mediate the cellular uptake of the APOE-containing lipoprotein particles. Finally, APOE also has a heparin-binding activity and binds heparan-sulfate proteoglycans on the surface of cells, a property that supports the capture and the receptor-mediated uptake of APOE-containing lipoproteins by cells. The polypeptide is Apolipoprotein E (Apoe) (Rattus norvegicus (Rat)).